Consider the following 38-residue polypeptide: Small ribosomal subunit protein uS12c (38 aa).

Positions 1 to 26 are disordered; sequence MPTIQQLIRNARQPIENRKKSPALRG.

The protein belongs to the universal ribosomal protein uS12 family. Part of the 30S ribosomal subunit.

It is found in the plastid. The protein localises to the chloroplast. With S4 and S5 plays an important role in translational accuracy. Located at the interface of the 30S and 50S subunits. This Pinus contorta (Shore pine) protein is Small ribosomal subunit protein uS12c (rps12).